The primary structure comprises 133 residues: Small ribosomal subunit protein uS8 (133 aa).

It belongs to the universal ribosomal protein uS8 family. As to quaternary structure, part of the 30S ribosomal subunit.

Its function is as follows. One of the primary rRNA binding proteins, it binds directly to 16S rRNA central domain where it helps coordinate assembly of the platform of the 30S subunit. The chain is Small ribosomal subunit protein uS8 from Desulfurococcus amylolyticus (strain DSM 18924 / JCM 16383 / VKM B-2413 / 1221n) (Desulfurococcus kamchatkensis).